Reading from the N-terminus, the 246-residue chain is tRNA pseudouridine synthase A (246 aa).

The active-site Nucleophile is Asp52. Tyr111 is a binding site for substrate.

It belongs to the tRNA pseudouridine synthase TruA family. As to quaternary structure, homodimer.

It carries out the reaction uridine(38/39/40) in tRNA = pseudouridine(38/39/40) in tRNA. Its function is as follows. Formation of pseudouridine at positions 38, 39 and 40 in the anticodon stem and loop of transfer RNAs. The sequence is that of tRNA pseudouridine synthase A from Ehrlichia ruminantium (strain Welgevonden).